The primary structure comprises 205 residues: MNEQLVNRTMAFAGILQAIAQVQHLARHGELDNAELAASLNTILVTNPDNTADVYQDKIVLQKGYKLILNQLGDSSQKDVEITRYLVGVLALERKLVRSNSGLGMLAERINQVNRQLHHFAITDEQVIANLASIYSDIISNLGPKIQISGNPVCLQRPIIQQKIRALLLAAMRSAVLWRQLGGKRRHLVFARKAIVDTAKKSLTL.

This sequence belongs to the HflD family.

The protein localises to the cytoplasm. Its subcellular location is the cell inner membrane. This Shewanella baltica (strain OS155 / ATCC BAA-1091) protein is High frequency lysogenization protein HflD homolog.